We begin with the raw amino-acid sequence, 651 residues long: UvrABC system protein B (651 aa).

Residues 25–178 (RGISCGAKEQ…CQLQERLVEL (154 aa)) enclose the Helicase ATP-binding domain. 38 to 45 (GVTGSGKT) is a binding site for ATP. Residues 91-114 (YYDYYQPEAYIPQSDVYIEKDALI) carry the Beta-hairpin motif. In terms of domain architecture, Helicase C-terminal spans 427 to 591 (DGQIHDVMCE…IVPRTIQKPV (165 aa)). The segment at 593–615 (TSLSERVGSSRKKVSRDTNTDPA) is disordered. Residues 616–651 (NRDIVELQKEMLLCAENLDFERAVEIRNEIKRLTAP) enclose the UVR domain.

It belongs to the UvrB family. Forms a heterotetramer with UvrA during the search for lesions. Interacts with UvrC in an incision complex.

It localises to the cytoplasm. Its function is as follows. The UvrABC repair system catalyzes the recognition and processing of DNA lesions. A damage recognition complex composed of 2 UvrA and 2 UvrB subunits scans DNA for abnormalities. Upon binding of the UvrA(2)B(2) complex to a putative damaged site, the DNA wraps around one UvrB monomer. DNA wrap is dependent on ATP binding by UvrB and probably causes local melting of the DNA helix, facilitating insertion of UvrB beta-hairpin between the DNA strands. Then UvrB probes one DNA strand for the presence of a lesion. If a lesion is found the UvrA subunits dissociate and the UvrB-DNA preincision complex is formed. This complex is subsequently bound by UvrC and the second UvrB is released. If no lesion is found, the DNA wraps around the other UvrB subunit that will check the other stand for damage. The sequence is that of UvrABC system protein B from Anaplasma marginale (strain Florida).